Reading from the N-terminus, the 352-residue chain is Selenide, water dikinase (352 aa).

C23 is a catalytic residue. Residues K26 and 54–56 (SRD) contribute to the ATP site. D57 contacts Mg(2+). ATP-binding positions include D74, D97, and 145-147 (GHS). D97 lines the Mg(2+) pocket. D233 contributes to the Mg(2+) binding site.

The protein belongs to the selenophosphate synthase 1 family. Class I subfamily. As to quaternary structure, homodimer. Mg(2+) is required as a cofactor.

It carries out the reaction hydrogenselenide + ATP + H2O = selenophosphate + AMP + phosphate + 2 H(+). Functionally, synthesizes selenophosphate from selenide and ATP. The polypeptide is Selenide, water dikinase (Shewanella baltica (strain OS223)).